The following is a 2633-amino-acid chain: Non-reducing polyketide synthase sor2 (2633 aa).

The N-terminal acylcarrier protein transacylase domain (SAT) stretch occupies residues 67 to 237 (VSNAQKLAEW…TTSTRTVAAL (171 aa)). Cys140 serves as the catalytic Nucleophile; for transacylase activity. The Proton donor/acceptor; for transacylase activity role is filled by His258. A Ketosynthase family 3 (KS3) domain is found at 389–814 (ENDIAVIGMA…GSNASVIIKQ (426 aa)). Active-site for beta-ketoacyl synthase activity residues include Cys561, His696, and His737. The interval 928-1239 (CFGGQVSTFV…SKASSQLSDV (312 aa)) is malonyl-CoA:ACP transacylase (MAT) domain. The segment at 1307 to 1437 (PQPVGLYTLL…GQLHFQASDD (131 aa)) is N-terminal hotdog fold. The 321-residue stretch at 1307–1627 (PQPVGLYTLL…YAPVSLDQLF (321 aa)) folds into the PKS/mFAS DH domain. The product template (PT) domain stretch occupies residues 1338–1509 (MSDHAIGKAQ…SNESAGRLVR (172 aa)). A C-terminal hotdog fold region spans residues 1464–1627 (GRSDEVIQGQ…YAPVSLDQLF (164 aa)). Residues 1684–1758 (EELWLRLRPV…GILKFLQSTL (75 aa)) form the Carrier domain. Residue Ser1718 is modified to O-(pantetheine 4'-phosphoryl)serine. Positions 1762-1792 (DVHDSSETMSTVSSDGNVHSPPTSGSEMASP) are disordered. A compositionally biased stretch (polar residues) spans 1768 to 1790 (ETMSTVSSDGNVHSPPTSGSEMA). The interval 1982 to 2166 (FELMADFLTR…ASGFKHVRWT (185 aa)) is methyltransferase domain. Residues 2253–2495 (VTGATGSLGS…TLRALPDVDG (243 aa)) are NADPH-binding (R) domain.

It depends on pantetheine 4'-phosphate as a cofactor.

It participates in secondary metabolite biosynthesis. Non-reducing polyketide synthase; part of the SOR gene cluster that mediates the biosynthesis of sorbicillinoids, a diverse group of yellow secondary metabolites that restrict growth of competing pathogenic fungi but not of bacteria. Sorbicillinoids biosynthesis requires the action of two PKSs. The SOR cluster is required for the production of trichodimerol and dihydrotrichotetronin, with sor2 being sufficient for production of trichodimerol, but not dihydrotrichotetronin in the light. Sor1 iteratively combines three acetyl units and the growing chain is modified by the ketoacyl reductase subunit, and optional by the enoyl reductase subunit in the second cycle. The polyketide is then handed over to the PKS sor2, which adds three more acetyl units, and two methyl groups. Sor2 releases an aldehyde, which undergoes spontaneous cyclization resulting in the formation of sorbicillin or 2',3'-dihydrosorbicillin. The monooxygenase sor5 oxidizes sorbicillin and 2',3'-dihydrosorbicillin to 2',3'-dihydrosorbicillinol and sorbicillinol, respectively. The oxidoreductase sor8 further converts sorbicillinol into oxosorbicillinol. Sorbicillinol is the building block for the other sorbicillinoids such as disorbicillinol, bisvertinolon, dihydrobisvertinolone, and dihydrotrichotetronine. The polypeptide is Non-reducing polyketide synthase sor2 (Hypocrea jecorina (strain QM6a) (Trichoderma reesei)).